The sequence spans 361 residues: 3-galactosyl-N-acetylglucosaminide 4-alpha-L-fucosyltransferase FUT3 (361 aa).

Over 1–15 (MDPLGAAKPQWPWRR) the chain is Cytoplasmic. The helical; Signal-anchor for type II membrane protein transmembrane segment at 16–34 (CLAALLFQLLVAVCFFSYL) threads the bilayer. The Lumenal portion of the chain corresponds to 35-361 (RVSRDDATGS…TVRSIAAWFT (327 aa)). Residues 39-58 (DDATGSPRAPSGSSRQDTTP) form a disordered region. 2 N-linked (GlcNAc...) asparagine glycosylation sites follow: N154 and N185.

The protein belongs to the glycosyltransferase 10 family. In terms of processing, glycosylated. In terms of tissue distribution, highly expressed in stomach, colon, small intestine, lung and kidney and to a lesser extent in salivary gland, bladder, uterus and liver.

The protein resides in the golgi apparatus. Its subcellular location is the golgi stack membrane. It catalyses the reaction a beta-D-galactosyl-(1-&gt;3)-N-acetyl-beta-D-glucosaminyl derivative + GDP-beta-L-fucose = a beta-D-galactosyl-(1-&gt;3)-[alpha-L-fucosyl-(1-&gt;4)]-N-acetyl-beta-D-glucosaminyl derivative + GDP + H(+). The catalysed reaction is an N-acetyl-alpha-neuraminyl-(2-&gt;3)-beta-D-galactosyl-(1-&gt;4)-N-acetyl-beta-D-glucosaminyl derivative + GDP-beta-L-fucose = an alpha-Neu5Ac-(2-&gt;3)-beta-D-Gal-(1-&gt;4)-[alpha-L-Fuc-(1-&gt;3)]-beta-D-GlcNAc derivative + GDP + H(+). It carries out the reaction a beta-D-galactosyl-(1-&gt;4)-N-acetyl-beta-D-glucosaminyl derivative + GDP-beta-L-fucose = a beta-D-galactosyl-(1-&gt;4)-[alpha-L-fucosyl-(1-&gt;3)]-N-acetyl-beta-D-glucosaminyl derivative + GDP + H(+). The enzyme catalyses an alpha-Neu5Ac-(2-&gt;3)-beta-D-Gal-(1-&gt;4)-beta-D-GlcNAc-(1-&gt;3)-beta-D-Gal-(1-&gt;4)-[alpha-L-Fuc-(1-&gt;3)]-beta-D-GlcNAc derivative + GDP-beta-L-fucose = an alpha-Neu5Ac-(2-&gt;3)-beta-D-Gal-(1-&gt;4)-[alpha-L-Fuc-(1-&gt;3)]-beta-D-GlcNAc-(1-&gt;3)-beta-D-Gal-(1-&gt;4)-[alpha-L-Fuc-(1-&gt;3)]-beta-D-GlcNAc derivative + GDP + H(+). It catalyses the reaction Lc4Cer + GDP-beta-L-fucose = a lactoside III(4)-a-Fuc-Lc4Cer + GDP + H(+). The catalysed reaction is a beta-D-Gal-(1-&gt;3)-beta-D-GlcNAc-(1-&gt;3)-beta-D-Gal-(1-&gt;4)-beta-D-Glc-(1&lt;-&gt;1')-Cer(d18:1(4E)) + GDP-beta-L-fucose = a III(4)-a-Fuc-Lc4Cer(d18:1(4E)) + GDP + H(+). It carries out the reaction N-acetyl-alpha-neuraminosyl-(2-&gt;3)-beta-D-galactosyl-(1-&gt;3)-[N-acetyl-alpha-neuraminosyl-(2-&gt;6)]-N-acetyl-beta-D-glucosaminyl-(1-&gt;3)-beta-D-galactosyl-(1-&gt;4)-beta-D-glucosyl-(1&lt;-&gt;1')-N-acyl-sphing-4-enine + GDP-beta-L-fucose = N-acetyl-alpha-neuraminosyl-(2-&gt;3)-beta-D-galactosyl-(1-&gt;3)-alpha-L-fucosyl-(1-&gt;4)-[N-acetyl-alpha-neuraminosyl-(2-&gt;6)-N-acetyl-beta-D-glucosaminyl-(1-&gt;3)]-beta-D-galactosyl-(1-&gt;4)-beta-D-glucosyl-(1&lt;-&gt;1')-N-acyl-sphing-4-enine + GDP + H(+). The enzyme catalyses N-acetyl-alpha-neuraminosyl-(2-&gt;3)-beta-D-galactosyl-(1-&gt;3)-N-acetyl-beta-D-glucosaminyl-(1-&gt;3)-beta-D-galactosyl-(1-&gt;4)-beta-D-glucosyl-(1&lt;-&gt;1')-N-acyl-sphing-4-enine + GDP-beta-L-fucose = N-acetyl-alpha-neuraminosyl-(2-&gt;3)-beta-D-galactosyl-(1-&gt;3)-alpha-L-fucosyl-(1-&gt;4)-[N-acetyl-beta-D-glucosaminyl-(1-&gt;3)]-beta-D-galactosyl-(1-&gt;4)-beta-D-glucosyl-(1&lt;-&gt;1')-N-acyl-sphing-4-enine + GDP + H(+). It catalyses the reaction beta-D-galactosyl-(1-&gt;3)-N-acetyl-D-glucosamine + GDP-beta-L-fucose = beta-D-galactosyl-(1-&gt;3)-[alpha-L-fucosyl-(1-&gt;4)]-N-acetyl-D-glucosamine + GDP + H(+). The catalysed reaction is alpha-L-Fuc-(1-&gt;2)-beta-D-Gal-(1-&gt;3)-D-GlcNAc + GDP-beta-L-fucose = alpha-L-Fuc-(1-&gt;2)-beta-D-Gal-(1-&gt;3)-[alpha-L-Fuc-(1-&gt;4)]-D-GlcNAc + GDP + H(+). It carries out the reaction alpha-L-Fuc-(1-&gt;2)-beta-D-Gal-(1-&gt;4)-D-GlcNAc + GDP-beta-L-fucose = alpha-L-Fuc-(1-&gt;2)-beta-D-Gal-(1-&gt;4)-[alpha-L-Fuc-(1-&gt;3)]-D-GlcNAc + GDP + H(+). The enzyme catalyses beta-D-galactosyl-(1-&gt;4)-N-acetyl-D-glucosamine + GDP-beta-L-fucose = beta-D-galactosyl-(1-&gt;4)-[alpha-L-fucosyl-(1-&gt;3)]-N-acetyl-D-glucosamine + GDP + H(+). It catalyses the reaction lactose + GDP-beta-L-fucose = beta-D-galactosyl-(1-&gt;4)-[alpha-L-fucosyl-(1-&gt;3)]-D-glucose + GDP + H(+). The catalysed reaction is an alpha-Neu5Ac-(2-&gt;3)-beta-D-Gal-(1-&gt;3)-D-GlcNAc derivative + GDP-beta-L-fucose = an alpha-Neu5Ac-(2-&gt;3)-beta-D-Gal-(1-&gt;3)-[alpha-L-Fuc-(1-&gt;4)]-beta-D-GlcNAc derivative + GDP + H(+). It participates in protein modification; protein glycosylation. Its function is as follows. Catalyzes the transfer of L-fucose, from a guanosine diphosphate-beta-L-fucose, to both the subterminal N-acetyl glucosamine (GlcNAc) of type 1 chain (beta-D-Gal-(1-&gt;3)-beta-D-GlcNAc) glycolipids and oligosaccharides via an alpha(1,4) linkage, and the subterminal glucose (Glc) or GlcNAc of type 2 chain (beta-D-Gal-(1-&gt;4)-beta-D-GlcNAc) oligosaccharides via an alpha(1,3) linkage, independently of the presence of terminal alpha-L-fucosyl-(1,2) moieties on the terminal galactose of these acceptors. Through its catalytic activity, participates in the synthesis of antigens of the Lewis blood group system, i.e. Lewis a (Le(a)), lewis b (Le(b)), Lewis x/SSEA-1 (Le(x)) and lewis y (Le(y)) antigens. Also catalyzes the transfer of L-fucose to subterminal GlcNAc of sialyl- and disialyl-lactotetraosylceramide to produce sialyl Lewis a (sLe(a)) and disialyl Lewis a via an alpha(1,4) linkage and therefore may regulate cell surface sLe(a) expression and consequently regulates adhesive properties to E-selectin, cell proliferation and migration. Catalyzes the transfer of an L-fucose to 3'-sialyl-N-acetyllactosamine by an alpha(1,3) linkage, which allows the formation of sialyl-Lewis x structure and therefore may regulate the sialyl-Lewis x surface antigen expression and consequently adhesive properties to E-selectin. Prefers type 1 chain over type 2 acceptors. Type 1 tetrasaccharide is a better acceptor than type 1 disaccharide suggesting that a beta anomeric configuration of GlcNAc in the substrate is preferred. Lewis-positive (Le(+)) individuals have an active enzyme while Lewis-negative (Le(-)) individuals have an inactive enzyme. This is 3-galactosyl-N-acetylglucosaminide 4-alpha-L-fucosyltransferase FUT3 from Homo sapiens (Human).